The primary structure comprises 2293 residues: Protein Ycf2 A (2293 aa).

1647–1654 contributes to the ATP binding site; sequence GSIGTGRS.

It belongs to the Ycf2 family.

It localises to the plastid. The protein resides in the chloroplast stroma. Functionally, probable ATPase of unknown function. Its presence in a non-photosynthetic plant (Epifagus virginiana) and experiments in tobacco indicate that it has an essential function which is probably not related to photosynthesis. The chain is Protein Ycf2 A from Crucihimalaya wallichii (Rock-cress).